A 201-amino-acid chain; its full sequence is 3-isopropylmalate dehydratase small subunit (201 aa).

This sequence belongs to the LeuD family. LeuD type 1 subfamily. As to quaternary structure, heterodimer of LeuC and LeuD.

It catalyses the reaction (2R,3S)-3-isopropylmalate = (2S)-2-isopropylmalate. The protein operates within amino-acid biosynthesis; L-leucine biosynthesis; L-leucine from 3-methyl-2-oxobutanoate: step 2/4. Catalyzes the isomerization between 2-isopropylmalate and 3-isopropylmalate, via the formation of 2-isopropylmaleate. The sequence is that of 3-isopropylmalate dehydratase small subunit from Cereibacter sphaeroides (strain ATCC 17029 / ATH 2.4.9) (Rhodobacter sphaeroides).